Reading from the N-terminus, the 184-residue chain is Flavin prenyltransferase UbiX (184 aa).

FMN is bound by residues 9 to 11 (GAS), Ser34, 85 to 88 (SMKT), and Arg120. Positions 150 and 166 each coordinate dimethylallyl phosphate.

The protein belongs to the UbiX/PAD1 family.

It catalyses the reaction dimethylallyl phosphate + FMNH2 = prenylated FMNH2 + phosphate. In terms of biological role, flavin prenyltransferase that catalyzes the synthesis of the prenylated FMN cofactor (prenyl-FMN) for 4-hydroxy-3-polyprenylbenzoic acid decarboxylase UbiD. The prenyltransferase is metal-independent and links a dimethylallyl moiety from dimethylallyl monophosphate (DMAP) to the flavin N5 and C6 atoms of FMN. The chain is Flavin prenyltransferase UbiX from Methanocaldococcus jannaschii (strain ATCC 43067 / DSM 2661 / JAL-1 / JCM 10045 / NBRC 100440) (Methanococcus jannaschii).